The primary structure comprises 903 residues: Immunoglobulin superfamily member 22 (903 aa).

Ig-like domains follow at residues 67 to 158, 232 to 322, 418 to 508, and 606 to 696; these read PEFV…LLVT, EAIR…AELT, PIKF…AIVT, and PSVL…LHLS. Fibronectin type-III domains lie at 703–798 and 804–898; these read FASQ…AKDP and LVQD…MPPP.

This Homo sapiens (Human) protein is Immunoglobulin superfamily member 22 (IGSF22).